A 1363-amino-acid polypeptide reads, in one-letter code: DNA-directed RNA polymerase subunit beta (1363 aa).

The protein belongs to the RNA polymerase beta chain family. In terms of assembly, the RNAP catalytic core consists of 2 alpha, 1 beta, 1 beta' and 1 omega subunit. When a sigma factor is associated with the core the holoenzyme is formed, which can initiate transcription.

The catalysed reaction is RNA(n) + a ribonucleoside 5'-triphosphate = RNA(n+1) + diphosphate. Its function is as follows. DNA-dependent RNA polymerase catalyzes the transcription of DNA into RNA using the four ribonucleoside triphosphates as substrates. This is DNA-directed RNA polymerase subunit beta from Syntrophus aciditrophicus (strain SB).